Reading from the N-terminus, the 487-residue chain is Glutamyl-tRNA(Gln) amidotransferase subunit A (487 aa).

Residues K79 and S158 each act as charge relay system in the active site. The Acyl-ester intermediate role is filled by S182.

It belongs to the amidase family. GatA subfamily. In terms of assembly, heterotrimer of A, B and C subunits.

It carries out the reaction L-glutamyl-tRNA(Gln) + L-glutamine + ATP + H2O = L-glutaminyl-tRNA(Gln) + L-glutamate + ADP + phosphate + H(+). Allows the formation of correctly charged Gln-tRNA(Gln) through the transamidation of misacylated Glu-tRNA(Gln) in organisms which lack glutaminyl-tRNA synthetase. The reaction takes place in the presence of glutamine and ATP through an activated gamma-phospho-Glu-tRNA(Gln). The chain is Glutamyl-tRNA(Gln) amidotransferase subunit A from Ehrlichia canis (strain Jake).